The following is a 323-amino-acid chain: 4-hydroxy-3-methylbut-2-enyl diphosphate reductase (323 aa).

Cysteine 13 lines the [4Fe-4S] cluster pocket. Positions 42 and 75 each coordinate (2E)-4-hydroxy-3-methylbut-2-enyl diphosphate. Dimethylallyl diphosphate-binding residues include histidine 42 and histidine 75. 2 residues coordinate isopentenyl diphosphate: histidine 42 and histidine 75. Cysteine 97 serves as a coordination point for [4Fe-4S] cluster. Histidine 125 provides a ligand contact to (2E)-4-hydroxy-3-methylbut-2-enyl diphosphate. Position 125 (histidine 125) interacts with dimethylallyl diphosphate. Histidine 125 is a binding site for isopentenyl diphosphate. The Proton donor role is filled by glutamate 127. Threonine 168 is a (2E)-4-hydroxy-3-methylbut-2-enyl diphosphate binding site. A [4Fe-4S] cluster-binding site is contributed by cysteine 198. Residues serine 226, serine 227, asparagine 228, and serine 270 each contribute to the (2E)-4-hydroxy-3-methylbut-2-enyl diphosphate site. Residues serine 226, serine 227, asparagine 228, and serine 270 each coordinate dimethylallyl diphosphate. The isopentenyl diphosphate site is built by serine 226, serine 227, asparagine 228, and serine 270.

This sequence belongs to the IspH family. [4Fe-4S] cluster is required as a cofactor.

It carries out the reaction isopentenyl diphosphate + 2 oxidized [2Fe-2S]-[ferredoxin] + H2O = (2E)-4-hydroxy-3-methylbut-2-enyl diphosphate + 2 reduced [2Fe-2S]-[ferredoxin] + 2 H(+). The catalysed reaction is dimethylallyl diphosphate + 2 oxidized [2Fe-2S]-[ferredoxin] + H2O = (2E)-4-hydroxy-3-methylbut-2-enyl diphosphate + 2 reduced [2Fe-2S]-[ferredoxin] + 2 H(+). Its pathway is isoprenoid biosynthesis; dimethylallyl diphosphate biosynthesis; dimethylallyl diphosphate from (2E)-4-hydroxy-3-methylbutenyl diphosphate: step 1/1. The protein operates within isoprenoid biosynthesis; isopentenyl diphosphate biosynthesis via DXP pathway; isopentenyl diphosphate from 1-deoxy-D-xylulose 5-phosphate: step 6/6. Its function is as follows. Catalyzes the conversion of 1-hydroxy-2-methyl-2-(E)-butenyl 4-diphosphate (HMBPP) into a mixture of isopentenyl diphosphate (IPP) and dimethylallyl diphosphate (DMAPP). Acts in the terminal step of the DOXP/MEP pathway for isoprenoid precursor biosynthesis. This chain is 4-hydroxy-3-methylbut-2-enyl diphosphate reductase, found in Nitrosomonas europaea (strain ATCC 19718 / CIP 103999 / KCTC 2705 / NBRC 14298).